The following is a 222-amino-acid chain: UPF0173 metal-dependent hydrolase Mboo_0816 (222 aa).

The protein belongs to the UPF0173 family.

The sequence is that of UPF0173 metal-dependent hydrolase Mboo_0816 from Methanoregula boonei (strain DSM 21154 / JCM 14090 / 6A8).